Consider the following 426-residue polypeptide: Glutamate/glutamine/aspartate/asparagine transport system permease protein BztB (426 aa).

The next 8 helical transmembrane spans lie at 25-45, 96-116, 132-152, 211-231, 252-272, 293-313, 340-360, and 396-416; these read SITIQIVVLLLFLAGLVWLLN, LLVSVLGCILATILGTIIGVL, VETFRNIPLLLWILLMGTILA, LPVSLNALAILAVMSASFWGW, WWPSLLILFAPISALLYGLGF, SFTALLIALTLYTAAFIAEIV, SLVILPQALRVIVPPLISQFL, and MLLMMLIYLTISLTISSLMNL. The ABC transmembrane type-1 domain maps to 92–414; sequence LLNTLLVSVL…TISLTISSLM (323 aa).

Belongs to the binding-protein-dependent transport system permease family. HisMQ subfamily. BztB and BztC form a heterodimer which can form a membrane complex with a homodimer of BztD.

The protein localises to the cell inner membrane. Functionally, part of a binding-protein-dependent transport system for glutamate, glutamine, aspartate and asparagine. Probably responsible for the translocation of the substrate across the membrane. This is Glutamate/glutamine/aspartate/asparagine transport system permease protein BztB (bztB) from Rhodobacter capsulatus (strain ATCC BAA-309 / NBRC 16581 / SB1003).